Reading from the N-terminus, the 2313-residue chain is Histone-lysine N-methyltransferase Set2 (2313 aa).

Disordered regions lie at residues 1–115 (MEES…ASTS), 179–442 (AVGG…EETF), 550–858 (EPPL…LKAK), 883–1106 (RLDE…KKAL), 1118–1150 (ETES…PFGD), and 1163–1251 (KRDK…SQGR). Residues 17–29 (GRGRGRPPKVALS) constitute a DNA-binding region (a.T hook 1). A compositionally biased stretch (basic and acidic residues) spans 73 to 82 (IKFDVRDLLN). Residues 101 to 115 (STGHSQSGTTAASTS) are compositionally biased toward low complexity. Residues 197–209 (PRKRGRPRKSQLA) constitute a DNA-binding region (a.T hook 2). Residues 221-241 (SCSDSDTNSTSTTTSNMSSDS) are compositionally biased toward low complexity. Positions 252-265 (PKSKLRVSLKRLKL) are enriched in basic residues. Residues 266–288 (GGRLESSDSGNSPSSSSPEVEPP) show a composition bias toward low complexity. Basic and acidic residues predominate over residues 330 to 345 (ESPKGEEEQEEGRPVE). Composition is skewed to acidic residues over residues 347 to 356 (EPQDLIDIDM), 365 to 375 (PDPEEDLDEIM), and 388 to 398 (ADDEAEEEEDA). T404 is subject to Phosphothreonine. Residues 412-433 (ADSCSSAPRRSRRSAPLSGSSR) are compositionally biased toward low complexity. Residues 552–563 (PLKDESDPKQTE) are compositionally biased toward basic and acidic residues. The span at 659–671 (EDYESNQEQVAED) shows a compositional bias: acidic residues. A compositionally biased stretch (polar residues) spans 676–685 (CNNQKGQKQT). 4 stretches are compositionally biased toward basic and acidic residues: residues 689–708 (EMKE…EKAM), 719–732 (VDKK…EKKV), 740–749 (VPEKKMDSKK), and 758–782 (KQKE…KSSA). 2 positions are modified to phosphoserine: S786 and S788. 3 stretches are compositionally biased toward polar residues: residues 800–833 (AQWS…SNQP), 918–928 (KSLSGKTSLRR), and 938–955 (LERN…NTSA). The segment covering 959–969 (KPSKVKKKINP) has biased composition (basic residues). A compositionally biased stretch (low complexity) spans 997-1010 (SSPVSTSSDSSSKR). The span at 1016-1039 (TTSDLDGGSKLDQRRYTICEDRQP) shows a compositional bias: basic and acidic residues. Low complexity-rich tracts occupy residues 1085–1097 (SRQN…SSAS) and 1118–1127 (ETESSESTSS). Basic and acidic residues predominate over residues 1163-1183 (KRDKVDEDQRKEGQDEVKREA). Residues 1199–1213 (TPATTPTPSPTQSNP) are compositionally biased toward low complexity. Residues 1307–1360 (NAEMQCDCFLTGDEEAQGHLSCGAGCINRMLMIECGPLCSNGARCTNKRFQQHQ) enclose the AWS domain. Residues C1312, C1314, C1328, C1332, C1341, C1345, and C1351 each coordinate Zn(2+). The SET domain occupies 1362–1479 (WPCRVFRTEK…PGEEITFDYQ (118 aa)). S-adenosyl-L-methionine contacts are provided by residues 1415–1417 (HYY) and 1440–1441 (NH). C1443 contributes to the Zn(2+) binding site. Residues 1486–1502 (DAQRCYCEAANCRGWIG) form the Post-SET domain. Q1488 serves as a coordination point for S-adenosyl-L-methionine. Residue C1490 participates in Zn(2+) binding. Y1491 contributes to the S-adenosyl-L-methionine binding site. Zn(2+) is bound by residues C1492 and C1497. Disordered stretches follow at residues 1501 to 1598 (IGGE…KPKV) and 1763 to 1860 (MKEH…RRTL). Residues 1505–1534 (PDSDEGEQLDEESDSDAEMDEEELEAEPEE) show a composition bias toward acidic residues. The segment covering 1539–1551 (KSAKAKAKSKLKA) has biased composition (basic residues). 3 stretches are compositionally biased toward basic and acidic residues: residues 1564–1574 (QTKPKDREYKA), 1763–1774 (MKEHEREADRQQ), and 1784–1806 (EDQR…RDTT). Over residues 1817 to 1832 (SGNNTICTITTQQKGS) the composition is skewed to polar residues. The span at 1840–1860 (TRNDNRRRSDIGPPSEQRRTL) shows a compositional bias: basic and acidic residues. One can recognise a WW domain in the interval 1963–1996 (DPLPPAWNWQVTSDGDIYYYNLRERISQWEPPSP). Phosphoserine occurs at positions 2130 and 2131. Residues 2177 to 2218 (LGTVGKRKLPMPPSVTVKKHRQEQRSKKVKSSQSPLTATSAR) are disordered. Positions 2193–2206 (VKKHRQEQRSKKVK) are enriched in basic residues. Polar residues predominate over residues 2207 to 2216 (SSQSPLTATS).

This sequence belongs to the class V-like SAM-binding methyltransferase superfamily. Histone-lysine methyltransferase family. SET2 subfamily. In terms of assembly, interacts with (phosphorylated) Polr2A.

It localises to the nucleus. The protein localises to the chromosome. It catalyses the reaction L-lysyl(36)-[histone H3] + 3 S-adenosyl-L-methionine = N(6),N(6),N(6)-trimethyl-L-lysyl(36)-[histone H3] + 3 S-adenosyl-L-homocysteine + 3 H(+). Histone methyltransferase that specifically trimethylates 'Lys-36' of histone H3 (H3K36me3). Represents the main enzyme generating H3K36me3, a specific tag for epigenetic transcriptional activation. Involved in dosage compensation in males (X chromosome dosage compensation) by mediating formation of H3K36me3, a mark recognized by msl-3 component of the MSL complex. In addition to its role in dosage compensation in males, promotes germline stem cell differentiation in females: catalyzes formation of H3K36me3, promoting recruitment of msl-3 and subsequent recruitment of the ATAC complex, leading to transcription of genes, such as RpS19b. This is Histone-lysine N-methyltransferase Set2 from Drosophila melanogaster (Fruit fly).